The primary structure comprises 168 residues: MPISQKNQNFIDRTFSIIANILLRIIPTTSGEKEAFAYYINGMSAQSEGNYAEALQNYYQAMHLEMDPYDRSYILYNIGIIHTSNGEHSKALEYYCRAIERNPFLPQAFNNMAVICHYRGEQAIQQGDSEIAEAWFDQAAEYWKQARTLTPGNYIEAQNWLTITWRSK.

TPR repeat units follow at residues 35–68 (AFAYYINGMSAQSEGNYAEALQNYYQAMHLEMDP), 72–105 (SYILYNIGIIHTSNGEHSKALEYYCRAIERNPFL), and 120–153 (GEQAIQQGDSEIAEAWFDQAAEYWKQARTLTPGN).

It belongs to the Ycf3 family.

The protein resides in the plastid membrane. Its function is as follows. Essential for the assembly of the photosystem I (PSI) complex. May act as a chaperone-like factor to guide the assembly of the PSI subunits. This Cuscuta gronovii (Common dodder) protein is Photosystem I assembly protein Ycf3.